The chain runs to 202 residues: Imidazoleglycerol-phosphate dehydratase (202 aa).

This sequence belongs to the imidazoleglycerol-phosphate dehydratase family.

It localises to the cytoplasm. The enzyme catalyses D-erythro-1-(imidazol-4-yl)glycerol 3-phosphate = 3-(imidazol-4-yl)-2-oxopropyl phosphate + H2O. It functions in the pathway amino-acid biosynthesis; L-histidine biosynthesis; L-histidine from 5-phospho-alpha-D-ribose 1-diphosphate: step 6/9. This is Imidazoleglycerol-phosphate dehydratase from Nocardioides sp. (strain ATCC BAA-499 / JS614).